The following is a 246-amino-acid chain: 4-hydroxy-tetrahydrodipicolinate reductase (246 aa).

7–12 (GCSGRM) lines the NAD(+) pocket. Position 34 (arginine 34) interacts with NADP(+). NAD(+) contacts are provided by residues 76-78 (ATT) and 102-105 (CPNT). The active-site Proton donor/acceptor is the histidine 135. Position 136 (histidine 136) interacts with (S)-2,3,4,5-tetrahydrodipicolinate. Lysine 139 (proton donor) is an active-site residue. Position 145 to 146 (145 to 146 (GT)) interacts with (S)-2,3,4,5-tetrahydrodipicolinate.

This sequence belongs to the DapB family.

It localises to the cytoplasm. The enzyme catalyses (S)-2,3,4,5-tetrahydrodipicolinate + NAD(+) + H2O = (2S,4S)-4-hydroxy-2,3,4,5-tetrahydrodipicolinate + NADH + H(+). It carries out the reaction (S)-2,3,4,5-tetrahydrodipicolinate + NADP(+) + H2O = (2S,4S)-4-hydroxy-2,3,4,5-tetrahydrodipicolinate + NADPH + H(+). The protein operates within amino-acid biosynthesis; L-lysine biosynthesis via DAP pathway; (S)-tetrahydrodipicolinate from L-aspartate: step 4/4. Functionally, catalyzes the conversion of 4-hydroxy-tetrahydrodipicolinate (HTPA) to tetrahydrodipicolinate. The polypeptide is 4-hydroxy-tetrahydrodipicolinate reductase (Chlamydia felis (strain Fe/C-56) (Chlamydophila felis)).